Reading from the N-terminus, the 365-residue chain is MIGDLMKNNNNGDVVDNEVNNRLSRWHHNSSRIIRVSRASGGKDRHSKVLTSKGPRDRRVRLSVSTALQFYDLQDRLGYDQPSKAVEWLIKAAEDSISELPSLNNTHFPTDDENHQNQTLTTVAANSLSKSACSSNSDTSKNSSGLSLSRSELRDKARERARERTAKETKERDHNHTSFTDLLNSGSDPVNSNRQWMASAPSSSPMEYFSSGLILGSGQQTHFPISTNSHPFSSISDHHHHHPHHQHQEFSFVPDHLISPAESNGGAFNLDFNMSTPSGAGAAVSAASGGGFSGFNRGTLQSNSTNQHQSFLANLQRFPTSESGGGPQFLFGALPAENHHHNHQFQLYYENGCRNSSEHKGKGKN.

Positions 42-100 constitute a TCP domain; that stretch reads GKDRHSKVLTSKGPRDRRVRLSVSTALQFYDLQDRLGYDQPSKAVEWLIKAAEDSISEL. Positions 130 to 150 are enriched in low complexity; that stretch reads KSACSSNSDTSKNSSGLSLSR. Disordered stretches follow at residues 130 to 202 and 220 to 245; these read KSAC…SAPS and QTHFPISTNSHPFSSISDHHHHHPHH. The 22-residue stretch at 151-172 folds into the R domain; sequence SELRDKARERARERTAKETKER. Positions 151 to 176 are enriched in basic and acidic residues; that stretch reads SELRDKARERARERTAKETKERDHNH. The segment covering 177–202 has biased composition (polar residues); sequence TSFTDLLNSGSDPVNSNRQWMASAPS.

In terms of assembly, interacts with SPL. Interacts with CRY1. As to expression, expressed in cotyledons, particularly in the vascular region, in leaves, roots, buds, flowers and immature siliques.

Its subcellular location is the nucleus. Functionally, plays a pivotal role in the control of morphogenesis of shoot organs by negatively regulating the expression of boundary-specific genes such as CUC genes, probably through the induction of miRNA (e.g. miR164). Participates in ovule development. Promotes light-regulated transcription of CHS, CAB, HYH and HY5. Positively regulates photomorphogenesis (e.g. hypocotyl elongation inhibition and cotyledon opening in response to blue light). This chain is Transcription factor TCP2, found in Arabidopsis thaliana (Mouse-ear cress).